The following is a 320-amino-acid chain: uncharacterized protein (320 aa).

Residues 196–273 are disordered; it reads VVPEYDFDSE…RSKNNSNTTK (78 aa). Residues 200-210 are compositionally biased toward acidic residues; the sequence is YDFDSESESDN. The span at 211–226 shows a compositional bias: basic and acidic residues; it reads SEEKRFVPVLETEKAP. Residues 248–273 show a composition bias toward polar residues; that stretch reads QPKNPKQTTLKNTLDTRSKNNSNTTK.

This is an uncharacterized protein from Acanthamoeba polyphaga mimivirus (APMV).